Consider the following 164-residue polypeptide: Serine/arginine-rich splicing factor 3 (164 aa).

Methionine 1 is subject to N-acetylmethionine. The segment at 1–90 is sufficient for interaction with NXF1 and SRSP; it reads MHRDSCPLDC…SNGEKRSRNR (90 aa). At serine 5 the chain carries Phosphoserine. One can recognise an RRM domain in the interval 10–83; sequence CKVYVGNLGN…CRVRVELSNG (74 aa). Lysine 23 carries the post-translational modification N6-acetyllysine. Positions 81-164 are disordered; sequence SNGEKRSRNR…RSRSRSNERK (84 aa). Over residues 107 to 128 the composition is skewed to basic residues; it reads RSPPPRRRSPRRRSFSRSRSRS. Residues 119 to 133 form a B-1 repeat; sequence RSFSRSRSRSLSRDR. Residues 119–164 form a 2 X approximate repeats, basic region; that stretch reads RSFSRSRSRSLSRDRRRERSLSRERNHKPSRSFSRSRSRSRSNERK. The span at 129 to 142 shows a compositional bias: basic and acidic residues; the sequence is LSRDRRRERSLSRE. Basic residues predominate over residues 143–158; that stretch reads RNHKPSRSFSRSRSRS. The B-2 repeat unit spans residues 149-164; sequence RSFSRSRSRSRSNERK.

The protein belongs to the splicing factor SR family. As to quaternary structure, interacts with CPSF6. Interacts with RBMY1A1. Interacts with SREK1/SFRS12. Interacts with NXF1. Interacts with YTHDC1, leading to recruitment to RNA elements adjacent to m6A sites. Interacts with SRSP; increases SRSF3 binding to specific exons. Post-translationally, phosphorylated by CLK1, CLK2, CLK3 and CLK4. Extensively phosphorylated on serine residues in the RS domain.

It localises to the nucleus. Its subcellular location is the nucleus speckle. It is found in the cytoplasm. Splicing factor, which binds the consensus motif 5'-C[ACU][AU]C[ACU][AC]C-3' within pre-mRNA and promotes specific exons inclusion during alternative splicing. Interaction with YTHDC1, a RNA-binding protein that recognizes and binds N6-methyladenosine (m6A)-containing RNAs, promotes recruitment of SRSF3 to its mRNA-binding elements adjacent to m6A sites within exons. Also functions as an adapter involved in mRNA nuclear export. Binds mRNA which is thought to be transferred to the NXF1-NXT1 heterodimer for export (TAP/NXF1 pathway); enhances NXF1-NXT1 RNA-binding activity. Involved in nuclear export of m6A-containing mRNAs via interaction with YTHDC1: interaction with YTHDC1 facilitates m6A-containing mRNA-binding to both SRSF3 and NXF1, promoting mRNA nuclear export. In Bos taurus (Bovine), this protein is Serine/arginine-rich splicing factor 3 (SRSF3).